The following is a 558-amino-acid chain: Energy-dependent translational throttle protein EttA (558 aa).

ABC transporter domains follow at residues 6 to 256 (YTMK…AVQG) and 322 to 552 (VEVD…RVTH). 38–45 (GPNGAGKS) provides a ligand contact to ATP. Residues 94–136 (GDIKIKLDRFNEVAELMATDYTDELMEEMGRLQEELDHADAWD) form an arm region. Positions 239–320 (GNYSTYLEKK…IPVGPRLGNV (82 aa)) are ptIM. An ATP-binding site is contributed by 354 to 361 (GPNGVGKT).

Belongs to the ABC transporter superfamily. ABCF family. Translational throttle EttA subfamily. As to quaternary structure, monomer. Probably contacts ribosomal proteins L1, L5, L33 and S7, the 16S and 23S rRNA and the P-site containing tRNA(fMet).

The protein resides in the cytoplasm. The enzyme catalyses ATP + H2O = ADP + phosphate + H(+). A translation factor that gates the progression of the 70S ribosomal initiation complex (IC, containing tRNA(fMet) in the P-site) into the translation elongation cycle by using a mechanism sensitive to the ATP/ADP ratio. Binds to the 70S ribosome E-site where it modulates the state of the translating ribosome during subunit translocation. ATP hydrolysis probably frees it from the ribosome, which can enter the elongation phase. In Mycobacterium tuberculosis (strain CDC 1551 / Oshkosh), this protein is Energy-dependent translational throttle protein EttA.